Here is a 431-residue protein sequence, read N- to C-terminus: Glutamate-1-semialdehyde 2,1-aminomutase (431 aa).

Lys-267 carries the post-translational modification N6-(pyridoxal phosphate)lysine.

Belongs to the class-III pyridoxal-phosphate-dependent aminotransferase family. HemL subfamily. As to quaternary structure, homodimer. It depends on pyridoxal 5'-phosphate as a cofactor.

It is found in the cytoplasm. It catalyses the reaction (S)-4-amino-5-oxopentanoate = 5-aminolevulinate. It functions in the pathway porphyrin-containing compound metabolism; protoporphyrin-IX biosynthesis; 5-aminolevulinate from L-glutamyl-tRNA(Glu): step 2/2. The chain is Glutamate-1-semialdehyde 2,1-aminomutase from Syntrophomonas wolfei subsp. wolfei (strain DSM 2245B / Goettingen).